A 396-amino-acid chain; its full sequence is Serine/threonine-protein kinase 32A (396 aa).

Residue Gly-2 is the site of N-myristoyl glycine attachment. One can recognise a Protein kinase domain in the interval 23 to 281 (FEILRAIGKG…LSDVQNFPYM (259 aa)). Residues 29–37 (IGKGSFGKV) and Lys-52 each bind ATP. Residue Asp-146 is the Proton acceptor of the active site. The disordered stretch occupies residues 373–396 (KRQPNLALEQTKDPQGEDGQNNNL).

Belongs to the protein kinase superfamily. Ser/Thr protein kinase family. Mg(2+) serves as cofactor.

It is found in the cell membrane. The enzyme catalyses L-seryl-[protein] + ATP = O-phospho-L-seryl-[protein] + ADP + H(+). It catalyses the reaction L-threonyl-[protein] + ATP = O-phospho-L-threonyl-[protein] + ADP + H(+). This chain is Serine/threonine-protein kinase 32A (STK32A), found in Homo sapiens (Human).